A 446-amino-acid chain; its full sequence is D(1A) dopamine receptor (446 aa).

Topologically, residues methionine 1 to arginine 22 are extracellular. Asparagine 4 carries N-linked (GlcNAc...) asparagine glycosylation. The helical transmembrane segment at isoleucine 23–isoleucine 48 threads the bilayer. Residues arginine 49–asparagine 59 lie on the Cytoplasmic side of the membrane. Residues phenylalanine 60 to alanine 86 form a helical membrane-spanning segment. The Extracellular portion of the chain corresponds to glycine 87–cysteine 95. A disulfide bridge connects residues cysteine 95 and cysteine 186. Residues asparagine 96 to valine 118 form a helical membrane-spanning segment. Over aspartate 119–lysine 137 the chain is Cytoplasmic. The helical transmembrane segment at alanine 138 to tryptophan 162 threads the bilayer. Residues histidine 163–arginine 192 lie on the Extracellular side of the membrane. The chain crosses the membrane as a helical span at residues threonine 193–tyrosine 218. At arginine 219–lysine 272 the chain is on the cytoplasmic side. A helical transmembrane segment spans residues threonine 273 to glycine 299. Residues serine 300–threonine 312 are Extracellular-facing. Residues phenylalanine 313–phenylalanine 337 traverse the membrane as a helical segment. Residues glutamine 338 to threonine 446 are Cytoplasmic-facing. Residues cysteine 347 and cysteine 351 are each lipidated (S-palmitoyl cysteine).

This sequence belongs to the G-protein coupled receptor 1 family. As to quaternary structure, interacts with DNAJC14 via its C-terminus PubMed:11331877. Interacts with DRD2. Interacts with DORIP1. In terms of processing, N-glycosylated. Brain, in the striatum, the nucleus accumbens, and the olfactory tubercle.

It localises to the cell membrane. The protein resides in the endoplasmic reticulum membrane. It is found in the cell projection. Its subcellular location is the dendrite. The protein localises to the cilium membrane. It localises to the dendritic spine. Its function is as follows. Dopamine receptor whose activity is mediated by G proteins which activate adenylyl cyclase. The chain is D(1A) dopamine receptor (Drd1) from Rattus norvegicus (Rat).